The primary structure comprises 148 residues: MFDLTLAIMLFLAALSYFSHNITVTIALLVLIVIRMTPLQQTFPWIEKQGMTVGIIILTIGVMAPIASGTIPSSTLMHSFLHWKSLTAIAIGIFVSWLGGRGVTLMSTQPTVVGGLLIGTIIGVSLFRGVPVGPLIAAGLLSLMLGKG.

The next 4 helical transmembrane spans lie at Ala-14–Ile-34, Met-51–Ile-71, Phe-80–Gly-100, and Val-112–Val-132.

It belongs to the UPF0756 family.

The protein localises to the cell membrane. The sequence is that of UPF0756 membrane protein ETA_17460 from Erwinia tasmaniensis (strain DSM 17950 / CFBP 7177 / CIP 109463 / NCPPB 4357 / Et1/99).